The chain runs to 91 residues: Small ribosomal subunit protein uS19 (91 aa).

This sequence belongs to the universal ribosomal protein uS19 family.

Protein S19 forms a complex with S13 that binds strongly to the 16S ribosomal RNA. The protein is Small ribosomal subunit protein uS19 of Cupriavidus taiwanensis (strain DSM 17343 / BCRC 17206 / CCUG 44338 / CIP 107171 / LMG 19424 / R1) (Ralstonia taiwanensis (strain LMG 19424)).